The chain runs to 340 residues: Protein arginine N-methyltransferase 1 (340 aa).

An SAM-dependent MTase PRMT-type domain is found at 16 to 311; sequence KDYYFDSYSH…TCKPAEGNHR (296 aa). Tyr19 bears the Phosphotyrosine mark. Positions 29, 38, 62, 84, and 113 each coordinate S-adenosyl-L-methionine. Catalysis depends on residues Glu128 and Glu137. Position 176 is a phosphoserine (Ser176).

This sequence belongs to the class I-like SAM-binding methyltransferase superfamily. Protein arginine N-methyltransferase family. Interacts with pab2.

It localises to the nucleus. It catalyses the reaction L-arginyl-[protein] + S-adenosyl-L-methionine = N(omega)-methyl-L-arginyl-[protein] + S-adenosyl-L-homocysteine + H(+). It carries out the reaction L-arginyl-[protein] + 2 S-adenosyl-L-methionine = N(omega),N(omega)-dimethyl-L-arginyl-[protein] + 2 S-adenosyl-L-homocysteine + 2 H(+). In terms of biological role, S-adenosyl-L-methionine-dependent protein-arginine N-methyltransferase that catalyzes both the mono- and asymmetric (type I) dimethylation of the guanidino nitrogens of arginine residues in target proteins. Asymmetrically dimethylates the polyadenylate-binding protein pab2, modulating pab2 oligomerization. The polypeptide is Protein arginine N-methyltransferase 1 (Schizosaccharomyces pombe (strain 972 / ATCC 24843) (Fission yeast)).